The chain runs to 130 residues: Small ribosomal subunit protein bS18 (130 aa).

Basic and acidic residues-rich tracts occupy residues 98–108 (KKMEESVKSAE) and 117–130 (EESKPKRTRKAKTE). A disordered region spans residues 98–130 (KKMEESVKSAEPKATAEATEESKPKRTRKAKTE).

Belongs to the bacterial ribosomal protein bS18 family. In terms of assembly, part of the 30S ribosomal subunit. Forms a tight heterodimer with protein bS6.

In terms of biological role, binds as a heterodimer with protein bS6 to the central domain of the 16S rRNA, where it helps stabilize the platform of the 30S subunit. The polypeptide is Small ribosomal subunit protein bS18 (Metamycoplasma arthritidis (strain 158L3-1) (Mycoplasma arthritidis)).